We begin with the raw amino-acid sequence, 158 residues long: Urease subunit beta (158 aa).

The segment at 113 to 158 is disordered; the sequence is EDDWRRSSAAGDAPQELPQVEAAERGRKLDEATDVGTEDTPEEGQN. A compositionally biased stretch (basic and acidic residues) spans 134–143; it reads AAERGRKLDE. Acidic residues predominate over residues 144-158; sequence ATDVGTEDTPEEGQN.

This sequence belongs to the urease beta subunit family. As to quaternary structure, heterotrimer of UreA (gamma), UreB (beta) and UreC (alpha) subunits. Three heterotrimers associate to form the active enzyme.

The protein localises to the cytoplasm. The enzyme catalyses urea + 2 H2O + H(+) = hydrogencarbonate + 2 NH4(+). It functions in the pathway nitrogen metabolism; urea degradation; CO(2) and NH(3) from urea (urease route): step 1/1. The sequence is that of Urease subunit beta from Corynebacterium glutamicum (strain R).